The chain runs to 496 residues: MWQIVFLTFGCDLVLASAYNNFRKSVDSTGRRQYQVQNGPCSYTFLLPETDSCRSSSSPYMSNAVQRDAPLDYDDSVQRLQVLENILENNTQWLMKLENYIQDNMKKEMVEIQQNVVQNQTAVMIEIGTSLLNQTAAQTRKLTDVEAQVLNQTTRLELQLLQHSISTNKLEKQILDQTSEINKLQDKNSFLEKKVLDMEDKHSVQLQSMKEQKDQLQVLVSKQSSVIDELEKKLVTATVNNSVLQKQQHDLMETVNSLLTMMSSPDYKSSVAVPKEEKTTFRDCAEIFKSGLTTSGIYTLTFPNSTEEVKAYCDMDMGGGGWTVIQHREDGSVDFQRTWKEYKEGFGSPLGEYWLGNEFVSQLTSGHRYVLKIQLKDWEGSEAHSLYEHFYLSGEESNYRIHLTGLTGTAGKISSISQPGSDFSTKDSDNDKCICKCSQMLTGGWWFDACGPSNLNGQYYPQKQNTNKFNGIKWYYWKGSGYSLKATTMMIRPADF.

An N-terminal signal peptide occupies residues 1-18 (MWQIVFLTFGCDLVLASA). N-linked (GlcNAc...) asparagine glycosylation is found at N89, N119, N133, N151, N240, and N304. The stretch at 159–256 (QLLQHSISTN…QQHDLMETVN (98 aa)) forms a coiled coil. A Fibrinogen C-terminal domain is found at 280–496 (TFRDCAEIFK…TTMMIRPADF (217 aa)). A disulfide bridge links C284 with C313. Ca(2+) contacts are provided by D429, D431, C433, and C435. Intrachain disulfides connect C433-C435 and C437-C450.

Interacts with TEK/TIE2, competing for the same binding site as ANGPT1. Interacts with ITGA5. Interacts with SVEP1/polydom. Interacts with THBD; this interaction significantly inhibits the generation of activated PC and TAFIa/CPB2 by the thrombin/thrombomodulin complex.

It localises to the secreted. In terms of biological role, binds to TEK/TIE2, competing for the ANGPT1 binding site, and modulating ANGPT1 signaling. Can induce tyrosine phosphorylation of TEK/TIE2 in the absence of ANGPT1. In the absence of angiogenic inducers, such as VEGF, ANGPT2-mediated loosening of cell-matrix contacts may induce endothelial cell apoptosis with consequent vascular regression. In concert with VEGF, it may facilitate endothelial cell migration and proliferation, thus serving as a permissive angiogenic signal. Involved in the regulation of lymphangiogenesis. The polypeptide is Angiopoietin-2 (Angpt2) (Rattus norvegicus (Rat)).